The following is a 252-amino-acid chain: Phosphate import ATP-binding protein PstB (252 aa).

One can recognise an ABC transporter domain in the interval 6 to 247 (IDTRDVNFWY…PEKEATQNYI (242 aa)). An ATP-binding site is contributed by 38 to 45 (GPSGCGKS).

It belongs to the ABC transporter superfamily. Phosphate importer (TC 3.A.1.7) family. The complex is composed of two ATP-binding proteins (PstB), two transmembrane proteins (PstC and PstA) and a solute-binding protein (PstS).

It localises to the cell inner membrane. The catalysed reaction is phosphate(out) + ATP + H2O = ADP + 2 phosphate(in) + H(+). Functionally, part of the ABC transporter complex PstSACB involved in phosphate import. Responsible for energy coupling to the transport system. This Bacteroides thetaiotaomicron (strain ATCC 29148 / DSM 2079 / JCM 5827 / CCUG 10774 / NCTC 10582 / VPI-5482 / E50) protein is Phosphate import ATP-binding protein PstB.